A 196-amino-acid chain; its full sequence is Ribosome maturation factor RimM (196 aa).

Residues 118-196 (QGEYYWRDLI…EMTVDWDPDF (79 aa)) form the PRC barrel domain.

It belongs to the RimM family. Binds ribosomal protein uS19.

The protein resides in the cytoplasm. In terms of biological role, an accessory protein needed during the final step in the assembly of 30S ribosomal subunit, possibly for assembly of the head region. Essential for efficient processing of 16S rRNA. May be needed both before and after RbfA during the maturation of 16S rRNA. It has affinity for free ribosomal 30S subunits but not for 70S ribosomes. The protein is Ribosome maturation factor RimM of Alcanivorax borkumensis (strain ATCC 700651 / DSM 11573 / NCIMB 13689 / SK2).